Reading from the N-terminus, the 204-residue chain is LexA repressor (204 aa).

Positions 27–47 (VREIGEAVGLASSSTVHGHLA) form a DNA-binding region, H-T-H motif. Catalysis depends on for autocatalytic cleavage activity residues Ser126 and Lys164.

It belongs to the peptidase S24 family. In terms of assembly, homodimer.

The enzyme catalyses Hydrolysis of Ala-|-Gly bond in repressor LexA.. Its function is as follows. Represses a number of genes involved in the response to DNA damage (SOS response), including recA and lexA. In the presence of single-stranded DNA, RecA interacts with LexA causing an autocatalytic cleavage which disrupts the DNA-binding part of LexA, leading to derepression of the SOS regulon and eventually DNA repair. This Listeria welshimeri serovar 6b (strain ATCC 35897 / DSM 20650 / CCUG 15529 / CIP 8149 / NCTC 11857 / SLCC 5334 / V8) protein is LexA repressor.